A 535-amino-acid polypeptide reads, in one-letter code: uncharacterized protein (535 aa).

A run of 6 helical transmembrane segments spans residues 63–83, 90–110, 143–163, 168–188, 226–246, and 258–278; these read LTGI…PSIY, VTFG…TYWI, VAAV…TLYG, VFVT…ATNC, SLGS…VLLV, and VLIL…ILAW. Positions 279–330 constitute an HAMP domain; it reads LTAAPVRVVRAALKRVEQGDLRGDLVVFDGTELGELQRGFNAMVNGLRERER. Positions 362–486 constitute a Guanylate cyclase domain; the sequence is AVVFVDIVGS…KPVNQAARLC (125 aa).

Belongs to the adenylyl cyclase class-3 family.

Its subcellular location is the cell membrane. This is an uncharacterized protein from Mycobacterium tuberculosis (strain ATCC 25618 / H37Rv).